The chain runs to 35 residues: Dermonecrotic toxin LdSicTox-alpha-1 (35 aa).

Histidine 11 is a catalytic residue. Mg(2+) is bound by residues glutamate 31 and aspartate 33.

Belongs to the arthropod phospholipase D family. Class I subfamily. The cofactor is Mg(2+). Contains 1 disulfide bond. In terms of tissue distribution, expressed by the venom gland.

The protein resides in the secreted. It catalyses the reaction an N-(acyl)-sphingosylphosphocholine = an N-(acyl)-sphingosyl-1,3-cyclic phosphate + choline. The catalysed reaction is an N-(acyl)-sphingosylphosphoethanolamine = an N-(acyl)-sphingosyl-1,3-cyclic phosphate + ethanolamine. It carries out the reaction a 1-acyl-sn-glycero-3-phosphocholine = a 1-acyl-sn-glycero-2,3-cyclic phosphate + choline. The enzyme catalyses a 1-acyl-sn-glycero-3-phosphoethanolamine = a 1-acyl-sn-glycero-2,3-cyclic phosphate + ethanolamine. Dermonecrotic toxins cleave the phosphodiester linkage between the phosphate and headgroup of certain phospholipids (sphingolipid and lysolipid substrates), forming an alcohol (often choline) and a cyclic phosphate. This toxin acts on sphingomyelin (SM). It may also act on ceramide phosphoethanolamine (CPE), lysophosphatidylcholine (LPC) and lysophosphatidylethanolamine (LPE), but not on lysophosphatidylserine (LPS), and lysophosphatidylglycerol (LPG). It acts by transphosphatidylation, releasing exclusively cyclic phosphate products as second products. Induces dermonecrosis, hemolysis, increased vascular permeability, edema, inflammatory response, and platelet aggregation. This chain is Dermonecrotic toxin LdSicTox-alpha-1, found in Loxosceles deserta (Desert recluse spider).